The following is a 193-amino-acid chain: Large ribosomal subunit protein bL25 (193 aa).

Belongs to the bacterial ribosomal protein bL25 family. CTC subfamily. In terms of assembly, part of the 50S ribosomal subunit; part of the 5S rRNA/L5/L18/L25 subcomplex. Contacts the 5S rRNA. Binds to the 5S rRNA independently of L5 and L18.

This is one of the proteins that binds to the 5S RNA in the ribosome where it forms part of the central protuberance. In Oleidesulfovibrio alaskensis (strain ATCC BAA-1058 / DSM 17464 / G20) (Desulfovibrio alaskensis), this protein is Large ribosomal subunit protein bL25.